The sequence spans 264 residues: 4-oxalocrotonate decarboxylase (264 aa).

Belongs to the hydratase/decarboxylase family.

It catalyses the reaction (3E)-2-oxohex-3-enedioate + H(+) = 2-oxopent-4-enoate + CO2. The protein operates within aromatic compound metabolism; benzoate degradation via hydroxylation. The protein is 4-oxalocrotonate decarboxylase (dmpH) of Pseudomonas sp. (strain CF600).